A 488-amino-acid polypeptide reads, in one-letter code: MRALVSRTPIAAALRSATLGSQCASIQYNSLNILDRLPQPLPSRSFRIRYTGVSTSGRVTQTCRRSFQLSASSRDKRGPQSAEPDPLERLEVKKVQQQHENEKDDSGRDTKSGGKVAKAMTKGDTIAGKLLTTPSRLFKLLIPLTTINRKDIEQIAILIHPQQPLSHLERLIQSEVPPIEDENGQKRPPAVSFIALQLEQDAIRPKRGMYEGTDAEIHRVEGGKDDATVAKRGEDFQEVDETFSYLRRPGPGQGDKEQRFIRWSQSTEIGDFIRDAARAKEFIVTIEGAPAGLEQIHVAVPSFDERTYFLRMRLRKISRRIQGLAEIKHECDALAHRGAQRVALGGFGILAFWWYIVYKLTFETDLGWDTMEPVTYLVSLSTLMGGYLWFLYHNREISYRSALDFTINARQKKLYQMKGIDLQVWESLIDEANAIRREIKNIAAEYDVDWDERKDEQDDRVTEALKKERRLKNGSQKEERPKDDRDDD.

The N-terminal 74 residues, 1–74 (MRALVSRTPI…RSFQLSASSR (74 aa)), are a transit peptide targeting the mitochondrion. The segment at 65 to 117 (RSFQLSASSRDKRGPQSAEPDPLERLEVKKVQQQHENEKDDSGRDTKSGGKVA) is disordered. Residues 75 to 339 (DKRGPQSAEP…ECDALAHRGA (265 aa)) are Mitochondrial matrix-facing. The span at 86–112 (PLERLEVKKVQQQHENEKDDSGRDTKS) shows a compositional bias: basic and acidic residues. The helical transmembrane segment at 340–361 (QRVALGGFGILAFWWYIVYKLT) threads the bilayer. At 362–370 (FETDLGWDT) the chain is on the mitochondrial intermembrane side. Residues 368–376 (WDTMEPVTY) carry the Selectivity filter motif. A helical transmembrane segment spans residues 371–391 (MEPVTYLVSLSTLMGGYLWFL). A Ca(2+)-binding site is contributed by E372. Residues 392–488 (YHNREISYRS…ERPKDDRDDD (97 aa)) are Mitochondrial matrix-facing. The segment at 464–488 (ALKKERRLKNGSQKEERPKDDRDDD) is disordered. Positions 475–488 (SQKEERPKDDRDDD) are enriched in basic and acidic residues.

The protein belongs to the MCU (TC 1.A.77) family. Homotetramer, assembles in a dimer or dimers configuration with two interfaces.

The protein localises to the mitochondrion inner membrane. It catalyses the reaction Ca(2+)(in) = Ca(2+)(out). Inhibited by ruthenium red or its derivative Ru360. Functionally, highly selective calcium channel localized to the inner mitochondrial membrane, which mediates calcium uptake into the mitochondrial matrix. Mitochondrial calcium homeostasis plays key roles in cellular physiology and regulates ATP production, cytoplasmic calcium signals and activation of cell death pathways. Sufficient to operate as a pore-forming channel without the need of calcium-sensor or auxiliary subunit. The chain is Calcium uniporter protein, mitochondrial from Neosartorya fischeri (strain ATCC 1020 / DSM 3700 / CBS 544.65 / FGSC A1164 / JCM 1740 / NRRL 181 / WB 181) (Aspergillus fischerianus).